We begin with the raw amino-acid sequence, 197 residues long: Rac-like GTP-binding protein ARAC1 (197 aa).

Position 13–20 (13–20 (GDGAVGKT)) interacts with GTP. Residues 35 to 43 (YVPTVFDNF) carry the Effector region motif. GTP contacts are provided by residues 60 to 64 (DTAGQ) and 118 to 121 (TKLD). The residue at position 194 (Cys194) is a Cysteine methyl ester. The S-geranylgeranyl cysteine moiety is linked to residue Cys194. A propeptide spans 195–197 (SIL) (removed in mature form).

This sequence belongs to the small GTPase superfamily. Rho family. Interacts with SPK1. Ubiquitous.

Its subcellular location is the cytoplasm. The protein resides in the membrane. In terms of biological role, inactive GDP-bound Rho GTPases reside in the cytosol, are found in a complex with Rho GDP-dissociation inhibitors (Rho GDIs), and are released from the GDI protein in order to translocate to membranes upon activation. This Arabidopsis thaliana (Mouse-ear cress) protein is Rac-like GTP-binding protein ARAC1 (ARAC1).